We begin with the raw amino-acid sequence, 316 residues long: Methionyl-tRNA formyltransferase (316 aa).

Residue 112–115 (SLLP) participates in (6S)-5,6,7,8-tetrahydrofolate binding.

Belongs to the Fmt family.

The enzyme catalyses L-methionyl-tRNA(fMet) + (6R)-10-formyltetrahydrofolate = N-formyl-L-methionyl-tRNA(fMet) + (6S)-5,6,7,8-tetrahydrofolate + H(+). Attaches a formyl group to the free amino group of methionyl-tRNA(fMet). The formyl group appears to play a dual role in the initiator identity of N-formylmethionyl-tRNA by promoting its recognition by IF2 and preventing the misappropriation of this tRNA by the elongation apparatus. In Flavobacterium psychrophilum (strain ATCC 49511 / DSM 21280 / CIP 103535 / JIP02/86), this protein is Methionyl-tRNA formyltransferase.